Consider the following 629-residue polypeptide: tRNA uridine 5-carboxymethylaminomethyl modification enzyme MnmG (629 aa).

FAD is bound at residue 13–18 (GGGHAG). An NAD(+)-binding site is contributed by 273–287 (GPRYCPSIEDKINRF).

The protein belongs to the MnmG family. Homodimer. Heterotetramer of two MnmE and two MnmG subunits. FAD is required as a cofactor.

The protein resides in the cytoplasm. NAD-binding protein involved in the addition of a carboxymethylaminomethyl (cmnm) group at the wobble position (U34) of certain tRNAs, forming tRNA-cmnm(5)s(2)U34. This chain is tRNA uridine 5-carboxymethylaminomethyl modification enzyme MnmG, found in Shewanella piezotolerans (strain WP3 / JCM 13877).